We begin with the raw amino-acid sequence, 496 residues long: Glycerol kinase (496 aa).

Thr12 is an ADP binding site. Thr12, Thr13, and Ser14 together coordinate ATP. Residue Thr12 coordinates sn-glycerol 3-phosphate. Arg16 serves as a coordination point for ADP. Arg82, Glu83, and Tyr134 together coordinate sn-glycerol 3-phosphate. Glycerol-binding residues include Arg82, Glu83, and Tyr134. His230 carries the post-translational modification Phosphohistidine; by HPr. Position 244 (Asp244) interacts with sn-glycerol 3-phosphate. Positions 244 and 245 each coordinate glycerol. The ADP site is built by Thr266 and Gly309. Positions 266, 309, 313, and 410 each coordinate ATP. Positions 410 and 414 each coordinate ADP.

This sequence belongs to the FGGY kinase family. Homotetramer and homodimer (in equilibrium). In terms of processing, the phosphoenolpyruvate-dependent sugar phosphotransferase system (PTS), including enzyme I, and histidine-containing protein (HPr) are required for the phosphorylation, which leads to the activation of the enzyme.

The catalysed reaction is glycerol + ATP = sn-glycerol 3-phosphate + ADP + H(+). It functions in the pathway polyol metabolism; glycerol degradation via glycerol kinase pathway; sn-glycerol 3-phosphate from glycerol: step 1/1. Its activity is regulated as follows. Activated by phosphorylation and inhibited by fructose 1,6-bisphosphate (FBP). Its function is as follows. Key enzyme in the regulation of glycerol uptake and metabolism. Catalyzes the phosphorylation of glycerol to yield sn-glycerol 3-phosphate. The polypeptide is Glycerol kinase (Bacillus thuringiensis subsp. konkukian (strain 97-27)).